Here is a 990-residue protein sequence, read N- to C-terminus: Mediator of RNA polymerase II transcription subunit 5 (990 aa).

The protein belongs to the Mediator complex subunit 5 family. Component of the Mediator complex.

The protein resides in the nucleus. Functionally, component of the Mediator complex, a coactivator involved in the regulated transcription of nearly all RNA polymerase II-dependent genes. Mediator functions as a bridge to convey information from gene-specific regulatory proteins to the basal RNA polymerase II transcription machinery. Mediator is recruited to promoters by direct interactions with regulatory proteins and serves as a scaffold for the assembly of a functional preinitiation complex with RNA polymerase II and the general transcription factors. The protein is Mediator of RNA polymerase II transcription subunit 5 (NUT1) of Debaryomyces hansenii (strain ATCC 36239 / CBS 767 / BCRC 21394 / JCM 1990 / NBRC 0083 / IGC 2968) (Yeast).